The sequence spans 365 residues: Inositol 4-methyltransferase (365 aa).

S-adenosyl-L-methionine is bound at residue Asp-232. His-270 functions as the Proton acceptor in the catalytic mechanism.

The protein belongs to the class I-like SAM-binding methyltransferase superfamily. Cation-independent O-methyltransferase family. Leaves and roots. The levels found in the leaves are 25 times greater than in the roots.

The catalysed reaction is myo-inositol + S-adenosyl-L-methionine = 1D-4-O-methyl-myo-inositol + S-adenosyl-L-homocysteine + H(+). The protein operates within polyol metabolism; myo-inositol metabolism. Catalyzes the methylation of myo-inositol into ononitol (1D-4-O-methyl myo-inositol), the first step in the biosynthesis of the cyclic sugar pinitol which has osmoprotective properties. This chain is Inositol 4-methyltransferase (IMT1), found in Mesembryanthemum crystallinum (Common ice plant).